A 150-amino-acid chain; its full sequence is UPF0178 protein PputW619_5044 (150 aa).

Belongs to the UPF0178 family.

This Pseudomonas putida (strain W619) protein is UPF0178 protein PputW619_5044.